The following is a 250-amino-acid chain: Ubiquinone/menaquinone biosynthesis C-methyltransferase UbiE (250 aa).

S-adenosyl-L-methionine is bound by residues T73, D94, N122 to A123, and S139.

Belongs to the class I-like SAM-binding methyltransferase superfamily. MenG/UbiE family.

The enzyme catalyses a 2-demethylmenaquinol + S-adenosyl-L-methionine = a menaquinol + S-adenosyl-L-homocysteine + H(+). It carries out the reaction a 2-methoxy-6-(all-trans-polyprenyl)benzene-1,4-diol + S-adenosyl-L-methionine = a 5-methoxy-2-methyl-3-(all-trans-polyprenyl)benzene-1,4-diol + S-adenosyl-L-homocysteine + H(+). It functions in the pathway quinol/quinone metabolism; menaquinone biosynthesis; menaquinol from 1,4-dihydroxy-2-naphthoate: step 2/2. It participates in cofactor biosynthesis; ubiquinone biosynthesis. Functionally, methyltransferase required for the conversion of demethylmenaquinol (DMKH2) to menaquinol (MKH2) and the conversion of 2-polyprenyl-6-methoxy-1,4-benzoquinol (DDMQH2) to 2-polyprenyl-3-methyl-6-methoxy-1,4-benzoquinol (DMQH2). The sequence is that of Ubiquinone/menaquinone biosynthesis C-methyltransferase UbiE from Francisella tularensis subsp. tularensis (strain WY96-3418).